The primary structure comprises 245 residues: Inner membrane protein YgaZ (245 aa).

The Cytoplasmic segment spans residues 1–24; it reads MESPTPQPAPGSATFMEGCKDSLP. The helical transmembrane segment at 25-45 threads the bilayer; that stretch reads IVISYIPVAFAFGLNATRLGF. Topologically, residues 46 to 63 are periplasmic; it reads SPLESVFFSCIIYAGASQ. The chain crosses the membrane as a helical span at residues 64 to 84; that stretch reads FVITAMLAAGSSLWIAALTVM. Residues 85-109 lie on the Cytoplasmic side of the membrane; the sequence is AMDVRHVLYGPSLRSRIIQRLQKSK. Residues 110 to 130 traverse the membrane as a helical segment; sequence TALWAFGLTDEVFAAATAKLV. Topologically, residues 131–140 are periplasmic; it reads RNNRRWSENW. The helical transmembrane segment at 141 to 161 threads the bilayer; it reads MIGIAFSSWSSWVFGTVIGAF. The Cytoplasmic segment spans residues 162–172; that stretch reads SGSGLLQGYPA. A helical membrane pass occupies residues 173-193; sequence VEAALGFMLPALFMSFLLASF. At 194 to 205 the chain is on the periplasmic side; sequence QRKQSLCVTAAL. The helical transmembrane segment at 206 to 226 threads the bilayer; that stretch reads VGALAGVTLFSIPVAILAGIV. Over 227–245 the chain is Cytoplasmic; the sequence is CGCLTALIQAFWQGAPDEL.

Belongs to the AzlC family.

It localises to the cell inner membrane. The sequence is that of Inner membrane protein YgaZ (ygaZ) from Escherichia coli (strain K12).